We begin with the raw amino-acid sequence, 367 residues long: Putative F-box protein At3g21130 (367 aa).

The region spanning 4 to 50 (KRNTVYLSEDLIVEILSRVSAVSLARLRTTSKRWNALVKDERLAKKH) is the F-box domain.

The sequence is that of Putative F-box protein At3g21130 from Arabidopsis thaliana (Mouse-ear cress).